A 352-amino-acid chain; its full sequence is Rhodopsin (352 aa).

Over 1–36 the chain is Extracellular; it reads MNGTEGPYFYVPMSNATGVVRSPYEYPQYYLAPPWA. 2 N-linked (GlcNAc...) asparagine glycosylation sites follow: Asn-2 and Asn-15. A helical transmembrane segment spans residues 37-61; sequence YACLAAYMFFLILVGFPVNFLTLYV. Residues 62-73 are Cytoplasmic-facing; it reads TIEHKKLRTPLN. Residues 74–96 traverse the membrane as a helical segment; sequence YILLNLAVADLFMVFGGFTTTMY. Topologically, residues 97 to 110 are extracellular; sequence TSLNGYFVFGRLGC. Cys-110 and Cys-187 are disulfide-bonded. Residues 111–133 traverse the membrane as a helical segment; the sequence is NLEGFFATFGGINSLWCLVVLSI. A 'Ionic lock' involved in activated form stabilization motif is present at residues 134–136; it reads ERW. Residues 134-152 lie on the Cytoplasmic side of the membrane; that stretch reads ERWVVVCKPMSNFRFGENH. A helical transmembrane segment spans residues 153–173; that stretch reads AIMGVAFTWFMALACTVPPLV. Topologically, residues 174–202 are extracellular; that stretch reads GWSRYIPEGMQCSCGIDYYTRAEGFNNES. The chain crosses the membrane as a helical span at residues 203 to 224; that stretch reads FVIYMFVVHFLTPLFVITFCYG. Topologically, residues 225-252 are cytoplasmic; the sequence is RLVCTVKEAAAQQQESETTQRAEREVTR. The helical transmembrane segment at 253–274 threads the bilayer; the sequence is MVILMFIAYLVCWLPYASVSWW. Residues 275–286 are Extracellular-facing; it reads IFTNQGSEFGPI. Residues 287–308 traverse the membrane as a helical segment; sequence FMTVPAFFAKSSSIYNPVIYIC. The residue at position 296 (Lys-296) is an N6-(retinylidene)lysine. Residues 309–352 lie on the Cytoplasmic side of the membrane; sequence LNKQFRHCMITTLCCGKNPFEEEEGASTTASKTEASSVSSVSPA. Residues Cys-322 and Cys-323 are each lipidated (S-palmitoyl cysteine). The interval 331–352 is disordered; sequence EEGASTTASKTEASSVSSVSPA. Over residues 334 to 352 the composition is skewed to low complexity; sequence ASTTASKTEASSVSSVSPA.

This sequence belongs to the G-protein coupled receptor 1 family. Opsin subfamily. Post-translationally, phosphorylated on some or all of the serine and threonine residues present in the C-terminal region. In terms of processing, contains one covalently linked retinal chromophore.

It is found in the membrane. It localises to the cell projection. The protein resides in the cilium. The protein localises to the photoreceptor outer segment. Functionally, photoreceptor required for image-forming vision at low light intensity. While most salt water fish species use retinal as chromophore, most freshwater fish use 3-dehydroretinal, or a mixture of retinal and 3-dehydroretinal. Light-induced isomerization of 11-cis to all-trans retinal triggers a conformational change that activates signaling via G-proteins. Subsequent receptor phosphorylation mediates displacement of the bound G-protein alpha subunit by arrestin and terminates signaling. In Psalidodon fasciatus (Banded astyanax), this protein is Rhodopsin (rho).